Consider the following 252-residue polypeptide: Ubiquinone biosynthesis O-methyltransferase (252 aa).

Positions 51, 70, 91, and 136 each coordinate S-adenosyl-L-methionine.

Belongs to the methyltransferase superfamily. UbiG/COQ3 family.

It carries out the reaction a 3-demethylubiquinol + S-adenosyl-L-methionine = a ubiquinol + S-adenosyl-L-homocysteine + H(+). The enzyme catalyses a 3-(all-trans-polyprenyl)benzene-1,2-diol + S-adenosyl-L-methionine = a 2-methoxy-6-(all-trans-polyprenyl)phenol + S-adenosyl-L-homocysteine + H(+). The protein operates within cofactor biosynthesis; ubiquinone biosynthesis. Functionally, O-methyltransferase that catalyzes the 2 O-methylation steps in the ubiquinone biosynthetic pathway. This chain is Ubiquinone biosynthesis O-methyltransferase, found in Albidiferax ferrireducens (strain ATCC BAA-621 / DSM 15236 / T118) (Rhodoferax ferrireducens).